Reading from the N-terminus, the 506-residue chain is Histidine ammonia-lyase (506 aa).

The 5-imidazolinone (Ala-Gly) cross-link spans 143-145; it reads ASG. A 2,3-didehydroalanine (Ser) modification is found at serine 144.

This sequence belongs to the PAL/histidase family. Post-translationally, contains an active site 4-methylidene-imidazol-5-one (MIO), which is formed autocatalytically by cyclization and dehydration of residues Ala-Ser-Gly.

It is found in the cytoplasm. The catalysed reaction is L-histidine = trans-urocanate + NH4(+). Its pathway is amino-acid degradation; L-histidine degradation into L-glutamate; N-formimidoyl-L-glutamate from L-histidine: step 1/3. This chain is Histidine ammonia-lyase, found in Salmonella typhimurium (strain LT2 / SGSC1412 / ATCC 700720).